We begin with the raw amino-acid sequence, 303 residues long: Ornithine carbamoyltransferase (303 aa).

Carbamoyl phosphate-binding positions include 52–55 (STRT), Gln79, Arg103, and 130–133 (HPCQ). Residues Asn161, Asp222, and 226 to 227 (SM) contribute to the L-ornithine site. Carbamoyl phosphate contacts are provided by residues 262 to 263 (CL) and Lys290.

The protein belongs to the aspartate/ornithine carbamoyltransferase superfamily. OTCase family.

The protein resides in the cytoplasm. The catalysed reaction is carbamoyl phosphate + L-ornithine = L-citrulline + phosphate + H(+). The protein operates within amino-acid biosynthesis; L-arginine biosynthesis; L-arginine from L-ornithine and carbamoyl phosphate: step 1/3. Its function is as follows. Reversibly catalyzes the transfer of the carbamoyl group from carbamoyl phosphate (CP) to the N(epsilon) atom of ornithine (ORN) to produce L-citrulline. This chain is Ornithine carbamoyltransferase, found in Desulfotalea psychrophila (strain LSv54 / DSM 12343).